The chain runs to 206 residues: Superoxide dismutase [Mn] (206 aa).

4 residues coordinate Mn(2+): H27, H82, D168, and H172.

It belongs to the iron/manganese superoxide dismutase family. As to quaternary structure, homodimer. Requires Mn(2+) as cofactor.

The enzyme catalyses 2 superoxide + 2 H(+) = H2O2 + O2. Destroys superoxide anion radicals which are normally produced within the cells and which are toxic to biological systems. This Salmonella typhi protein is Superoxide dismutase [Mn] (sodA).